A 63-amino-acid polypeptide reads, in one-letter code: MNFYNIFVFVALILAITIGQSEAGWLKKIGKKIERVGQHTRDATIQGLGVAQQAANVAATARG.

A signal peptide spans 1–23 (MNFYNIFVFVALILAITIGQSEA). An Arginine amide modification is found at Arg-62.

The protein belongs to the cecropin family.

The protein localises to the secreted. Functionally, cecropins have lytic and antibacterial activity against several Gram-positive and Gram-negative bacteria. The chain is Cecropin-A1 (CecA1) from Drosophila sechellia (Fruit fly).